We begin with the raw amino-acid sequence, 812 residues long: Plasminogen (812 aa).

The signal sequence occupies residues 1–19 (MDHKEVILLFLLLLKPGQG). Residues 20-98 (DSLDGYISTQ…RDVILFEKRV (79 aa)) form the PAN domain. 21 disulfides stabilise this stretch: Cys49-Cys73, Cys53-Cys61, Cys103-Cys181, Cys124-Cys164, Cys152-Cys176, Cys185-Cys262, Cys188-Cys316, Cys206-Cys245, Cys234-Cys257, Cys275-Cys352, Cys296-Cys335, Cys324-Cys347, Cys377-Cys454, Cys398-Cys437, Cys426-Cys449, Cys481-Cys560, Cys502-Cys543, Cys531-Cys555, Cys568-Cys687, Cys578-Cys586, and Cys609-Cys625. 5 consecutive Kringle domains span residues 103 to 181 (CKTG…IPEC), 184 to 262 (ECMY…IPRC), 275 to 352 (CLKG…IPSC), 377 to 454 (CYQS…LKRC), and 481 to 560 (CMYG…IPLC). The 229-residue stretch at 582-810 (VVGGCVANPH…FVDWIEREMR (229 aa)) folds into the Peptidase S1 domain. A Phosphoserine modification is found at Ser598. Catalysis depends on charge relay system residues His624 and Asp667. Ser690 is modified (phosphoserine). Intrachain disulfides connect Cys701–Cys768, Cys731–Cys747, and Cys758–Cys786. Residue Ser762 is the Charge relay system of the active site.

This sequence belongs to the peptidase S1 family. Plasminogen subfamily. In terms of assembly, interacts (both mature PLG and the angiostatin peptide) with AMOT and CSPG4. Interacts (via the Kringle domains) with HRG; the interaction tethers PLG to the cell surface and enhances its activation. Interacts (via Kringle 4 domain) with ADA; the interaction stimulates PLG activation when in complex with DPP4. Angiostatin: Interacts with ATP5F1A; the interaction inhibits most of the angiogenic effects of angiostatin. Post-translationally, in the presence of the inhibitor, the activation involves only cleavage after Arg-581, yielding two chains held together by two disulfide bonds. In the absence of the inhibitor, the activation involves additionally the removal of the activation peptide.

The protein localises to the secreted. The enzyme catalyses Preferential cleavage: Lys-|-Xaa &gt; Arg-|-Xaa, higher selectivity than trypsin. Converts fibrin into soluble products.. With respect to regulation, converted into plasmin by plasminogen activators, both plasminogen and its activator being bound to fibrin. Cannot be activated with streptokinase. In terms of biological role, plasmin dissolves the fibrin of blood clots and acts as a proteolytic factor in a variety of other processes including embryonic development, tissue remodeling, tumor invasion, and inflammation. In ovulation, weakens the walls of the Graafian follicle. It activates the urokinase-type plasminogen activator, collagenases and several complement zymogens, such as C1, C4 and C5. Cleavage of fibronectin and laminin leads to cell detachment and apoptosis. Also cleaves fibrin, thrombospondin and von Willebrand factor. Its role in tissue remodeling and tumor invasion may be modulated by CSPG4. Binds to cells. Functionally, angiostatin is an angiogenesis inhibitor that blocks neovascularization and growth of experimental primary and metastatic tumors in vivo. The chain is Plasminogen (Plg) from Mus musculus (Mouse).